The sequence spans 604 residues: uncharacterized protein (604 aa).

Belongs to the glycosyltransferase 2 family.

This is an uncharacterized protein from Rickettsia conorii (strain ATCC VR-613 / Malish 7).